A 729-amino-acid chain; its full sequence is Anti-bacteriophage protein B (729 aa).

In terms of domain architecture, Helicase ATP-binding spans 109 to 271 (FDLLKSGQNV…KLGYPHTFVS (163 aa)). Position 122-129 (122-129 (APTSMGKS)) interacts with ATP. In terms of domain architecture, Helicase C-terminal spans 297–472 (ALGEIAHACV…GIDTPINLLA (176 aa)).

It belongs to the helicase family. Interacts with AbpB.

Functionally, part of an antiviral system composed of AbpA and AbpB; when both are expressed from a plasmid they confer resistance to phages T2, T4, T7 and lambda but not RB32 or RB69. Resistance is temperature dependent, it can be seen at 30 degrees Celsius but not at 37 or 42 degrees Celsius. The system impairs phage but not bacterial DNA synthesis (shown for T4, T7 and lambda). Partially suppressed by mutations in T4 gene 41, a replicative helicase. Its function is as follows. Deletion or mutations in this gene were selected in directed evolution experiments for resistance to intense ionizing radiation (3000 Gy). This chain is Anti-bacteriophage protein B, found in Escherichia coli (strain K12).